The primary structure comprises 147 residues: Chorion class B protein B.L1 (147 aa).

The interval 1–38 is left arm; it reads IGCGRGCGGRGYGGLGYGGLGYGGLGYGGLGGGCGRGF. A run of 4 repeats spans residues 11–15, 16–20, 21–25, and 26–30. The segment at 11–30 is 4 X 5 AA tandem repeats of G-Y-G-G-L; that stretch reads GYGGLGYGGLGYGGLGYGGL. Residues 39-107 form a central domain region; the sequence is SGGGLPVATA…GNGAVGITRE (69 aa). Positions 108 to 147 are right arm (Gly-rich tandem repeats); the sequence is GGLGYGAGYGGGYGLGYGGYGGGYGLGYGGYGGCGCGCGY.

This sequence belongs to the chorion protein family.

In terms of biological role, this protein is one of many from the eggshell of the silk moth. This is Chorion class B protein B.L1 from Bombyx mori (Silk moth).